Reading from the N-terminus, the 192-residue chain is Adenylate kinase (192 aa).

10–15 (GAGKGT) is a binding site for ATP. The tract at residues 30 to 59 (STGDMLRAAVAQATEVGKRAKAVMDAGQLV) is NMP. Residues T31, R36, 57–59 (QLV), 85–88 (GYPR), and Q92 each bind AMP. Residues 126-142 (NRVAETVAAGGTVRSDD) are LID. R127 contributes to the ATP binding site. Positions 139 and 150 each coordinate AMP. A178 contacts ATP.

This sequence belongs to the adenylate kinase family. As to quaternary structure, monomer.

The protein resides in the cytoplasm. The catalysed reaction is AMP + ATP = 2 ADP. The protein operates within purine metabolism; AMP biosynthesis via salvage pathway; AMP from ADP: step 1/1. Catalyzes the reversible transfer of the terminal phosphate group between ATP and AMP. Plays an important role in cellular energy homeostasis and in adenine nucleotide metabolism. The chain is Adenylate kinase from Sinorhizobium medicae (strain WSM419) (Ensifer medicae).